Consider the following 229-residue polypeptide: Enolase-phosphatase E1 (229 aa).

It belongs to the HAD-like hydrolase superfamily. MasA/MtnC family. Monomer. It depends on Mg(2+) as a cofactor.

It catalyses the reaction 5-methylsulfanyl-2,3-dioxopentyl phosphate + H2O = 1,2-dihydroxy-5-(methylsulfanyl)pent-1-en-3-one + phosphate. It functions in the pathway amino-acid biosynthesis; L-methionine biosynthesis via salvage pathway; L-methionine from S-methyl-5-thio-alpha-D-ribose 1-phosphate: step 3/6. It participates in amino-acid biosynthesis; L-methionine biosynthesis via salvage pathway; L-methionine from S-methyl-5-thio-alpha-D-ribose 1-phosphate: step 4/6. Its function is as follows. Bifunctional enzyme that catalyzes the enolization of 2,3-diketo-5-methylthiopentyl-1-phosphate (DK-MTP-1-P) into the intermediate 2-hydroxy-3-keto-5-methylthiopentenyl-1-phosphate (HK-MTPenyl-1-P), which is then dephosphorylated to form the acireductone 1,2-dihydroxy-3-keto-5-methylthiopentene (DHK-MTPene). This is Enolase-phosphatase E1 from Yersinia pestis (strain Pestoides F).